The chain runs to 390 residues: Deoxyhypusine synthase-like protein (390 aa).

This sequence belongs to the deoxyhypusine synthase family.

The sequence is that of Deoxyhypusine synthase-like protein from Nostoc punctiforme (strain ATCC 29133 / PCC 73102).